The chain runs to 445 residues: Beclin-1 (445 aa).

The short motif at 103-122 (TMENLSRRLKVTGDLFDIMS) is the BH3 element. Residues 137–264 (DTLLDQLDTQ…QLDKLKKTNV (128 aa)) are a coiled coil. Positions 240 to 445 (DDLKSVENQM…AWVSSQFYNK (206 aa)) are evolutionary conserved domain (ECD). The segment at 420 to 445 (WTKALKFMLTNLKWGLAWVSSQFYNK) is required for membrane-association.

Belongs to the beclin family. Component of the PI3K (PI3KC3/PI3K-III/class III phosphatidylinositol 3-kinase) complex. May be proteolytically processed by caspases; the C-terminal fragment(s) may induce apoptosis.

The protein resides in the cytoplasm. It localises to the golgi apparatus. It is found in the trans-Golgi network membrane. Its subcellular location is the endosome membrane. The protein localises to the endoplasmic reticulum membrane. The protein resides in the mitochondrion membrane. It localises to the cytoplasmic vesicle. It is found in the autophagosome. Its function is as follows. Plays a central role in autophagy. Acts as core subunit of different PI3K complex forms that mediate formation of phosphatidylinositol 3-phosphate and are believed to play a role in multiple membrane trafficking pathways: PI3KC3-C1 is involved in initiation of autophagosomes and PI3KC3-C2 in maturation of autophagosomes and endocytosis. Involved in regulation of degradative endocytic trafficking and required for the abscission step in cytokinesis, probably in the context of PI3KC3-C2. Essential for the formation of PI3KC3-C2 but not PI3KC3-C1 PI3K complex forms. Involved in endocytosis including endosome formation in neuronal cells. The protein is Beclin-1 (becn1) of Xenopus laevis (African clawed frog).